Consider the following 172-residue polypeptide: uncharacterized protein (172 aa).

Helical transmembrane passes span 44-68 (VLVSSVLGALKVILIPCASTYAALT), 86-110 (LASYAMAWLLNILTIAVIIGLVFSL), and 117-135 (VVFISLGLLMSVTTSVTLF).

The protein belongs to the chlamydial CPn_0442/CT_006/TC_0274 family.

It is found in the cell membrane. This is an uncharacterized protein from Chlamydia pneumoniae (Chlamydophila pneumoniae).